The sequence spans 267 residues: 4-hydroxy-tetrahydrodipicolinate reductase (267 aa).

NAD(+)-binding positions include 8–13 and glutamate 34; that span reads GAAGRM. Arginine 35 lines the NADP(+) pocket. NAD(+)-binding positions include 98–100 and 122–125; these read GST and APNM. The active-site Proton donor/acceptor is the histidine 155. Histidine 156 contacts (S)-2,3,4,5-tetrahydrodipicolinate. Lysine 159 serves as the catalytic Proton donor. A (S)-2,3,4,5-tetrahydrodipicolinate-binding site is contributed by 165–166; that stretch reads GT.

The protein belongs to the DapB family.

The protein resides in the cytoplasm. The enzyme catalyses (S)-2,3,4,5-tetrahydrodipicolinate + NAD(+) + H2O = (2S,4S)-4-hydroxy-2,3,4,5-tetrahydrodipicolinate + NADH + H(+). The catalysed reaction is (S)-2,3,4,5-tetrahydrodipicolinate + NADP(+) + H2O = (2S,4S)-4-hydroxy-2,3,4,5-tetrahydrodipicolinate + NADPH + H(+). The protein operates within amino-acid biosynthesis; L-lysine biosynthesis via DAP pathway; (S)-tetrahydrodipicolinate from L-aspartate: step 4/4. Catalyzes the conversion of 4-hydroxy-tetrahydrodipicolinate (HTPA) to tetrahydrodipicolinate. This is 4-hydroxy-tetrahydrodipicolinate reductase from Geobacter sp. (strain M21).